The following is a 535-amino-acid chain: Flavin-containing monooxygenase 1 (535 aa).

A2 is subject to N-acetylalanine. Residues 2–513 (AKRVAIVGAG…TRIVQESSSP (512 aa)) lie on the Lumenal side of the membrane. FAD contacts are provided by residues 9 to 13 (GAGVS), E32, 40 to 41 (LW), and 61 to 62 (NS). NADP(+) contacts are provided by residues 60–61 (SN) and 195–198 (SGTD). Residues 514-534 (FESLLKLFAVLALLVSVFLIF) form a helical membrane-spanning segment. Position 535 (L535) is a topological domain, cytoplasmic.

It belongs to the FMO family. Requires FAD as cofactor. In terms of tissue distribution, liver.

The protein localises to the endoplasmic reticulum membrane. The catalysed reaction is hypotaurine + NADPH + O2 + H(+) = taurine + NADP(+) + H2O. It carries out the reaction hypotaurine + NADH + O2 + H(+) = taurine + NAD(+) + H2O. It catalyses the reaction trimethylamine + NADPH + O2 = trimethylamine N-oxide + NADP(+) + H2O. The enzyme catalyses N,N-dimethylaniline + NADPH + O2 + H(+) = N,N-dimethylaniline N-oxide + NADP(+) + H2O. Its function is as follows. Broad spectrum monooxygenase that catalyzes the oxygenation of a wide variety of nitrogen- and sulfur-containing compounds including xenobiotics. Catalyzes the S-oxygenation of hypotaurine to produce taurine, an organic osmolyte involved in cell volume regulation as well as a variety of cytoprotective and developmental processes. In vitro, catalyzes the N-oxygenation of trimethylamine (TMA) to produce trimethylamine N-oxide (TMAO) and could therefore participate to the detoxification of this compound that is generated by the action of gut microbiota from dietary precursors such as choline, choline containing compounds, betaine or L-carnitine. In Oryctolagus cuniculus (Rabbit), this protein is Flavin-containing monooxygenase 1 (FMO1).